The primary structure comprises 77 residues: Putative antitoxin VapB24 (77 aa).

Possibly the antitoxin component of a type II toxin-antitoxin (TA) system. Its cognate toxin is VapC24 (Potential). The chain is Putative antitoxin VapB24 (vapB24) from Mycobacterium tuberculosis (strain CDC 1551 / Oshkosh).